The chain runs to 44 residues: Somatoliberin (44 aa).

A Leucine amide modification is found at Leu-44.

This sequence belongs to the glucagon family.

It localises to the secreted. Functionally, GRF is released by the hypothalamus and acts on the adenohypophyse to stimulate the secretion of growth hormone. The chain is Somatoliberin (GHRH) from Capra hircus (Goat).